A 118-amino-acid chain; its full sequence is Large ribosomal subunit protein uL18 (118 aa).

Belongs to the universal ribosomal protein uL18 family. Part of the 50S ribosomal subunit; part of the 5S rRNA/L5/L18/L25 subcomplex. Contacts the 5S and 23S rRNAs.

This is one of the proteins that bind and probably mediate the attachment of the 5S RNA into the large ribosomal subunit, where it forms part of the central protuberance. The chain is Large ribosomal subunit protein uL18 from Rickettsia canadensis (strain McKiel).